The primary structure comprises 50 residues: Mast cell degranulating peptide (50 aa).

Positions 1–27 are cleaved as a signal peptide; it reads MISMLRCTFFFLSVILITSYFVTPTMS. K29 carries the N6-formyllysine; partial modification. Intrachain disulfides connect C30–C42 and C32–C46. 2 positions are modified to N6-formyllysine; partial: K44 and K48. Asparagine amide is present on N49.

Expressed by the venom gland.

It localises to the secreted. Functionally, potent anti-inflammatory agent. At low concentrations, mediates the degranulation of mast cells thus evoking an inflammatory response. Also acts as a neurotoxin capable of blocking a class of voltage-gated potassium channels. This Apis mellifera (Honeybee) protein is Mast cell degranulating peptide.